The following is a 492-amino-acid chain: MEINPFALGVSTLVEKNVGYITQIIGPVLDVAFPPGKMPNIYNSSIIKGKNPAGQEMNVTCEVQQLLGNNKVRAVAMSATDGLTREMKVVDTGAPLSVPVGEATLGRIFNVLGEPVDNLGSVDAGTTSPIHRSAPAFAQSDTKLSIFETGIKVVDLLAPYRRGGKIGLFGGAGVGKTVLIMELINNIAKAHGGVSVFGGVGERTREGNDLYMEMKESKVINEQNISESKVALVYGQMNEPPGARMRVGLTALTMAEYFRDVNKQDVLLFIDNILRFVQAGSEVSALLGRMPSAVGYQPTLGTEMGSLQERITSTKEGSITSIQAVYVPADDLTDPAPATTFAHLDATTVLSRGLAAKGIYPAVDPSDSTPTMLQPWIVGEQHYETAQEVKQTLQRYKELQDIIAILGLDESSEEDRLTVARARKIERFLSQPFFVAEVFTGSPGKYVTLVETIKGFQMILSGELDNLPEQAFYLVGDINEATAKAATSQVEN.

An ATP-binding site is contributed by glycine 170 to threonine 177.

This sequence belongs to the ATPase alpha/beta chains family. F-type ATPases have 2 components, CF(1) - the catalytic core - and CF(0) - the membrane proton channel. CF(1) has five subunits: alpha(3), beta(3), gamma(1), delta(1), epsilon(1). CF(0) has four main subunits: a(1), b(1), b'(1) and c(9-12).

The protein localises to the plastid. It localises to the chloroplast thylakoid membrane. It carries out the reaction ATP + H2O + 4 H(+)(in) = ADP + phosphate + 5 H(+)(out). Functionally, produces ATP from ADP in the presence of a proton gradient across the membrane. The catalytic sites are hosted primarily by the beta subunits. The polypeptide is ATP synthase subunit beta, chloroplastic (Huperzia lucidula (Shining clubmoss)).